The sequence spans 798 residues: Peregrinol diphosphate synthase TPS1, chloroplastic (798 aa).

A chloroplast-targeting transit peptide spans 1 to 25; that stretch reads MASLSTPNINNTTFVNSKTQLPAVK. A substrate-binding site is contributed by Lys-243. Mg(2+) is bound by residues Asp-377 and Asp-379. Positions 377-380 match the DXDD motif motif; the sequence is DLDD. Lys-463 contributes to the substrate binding site.

It belongs to the terpene synthase family. Mg(2+) is required as a cofactor. In terms of tissue distribution, mostly expressed in trichomes of leaves and fruits.

Its subcellular location is the plastid. The protein resides in the chloroplast. The catalysed reaction is peregrinol diphosphate = (2E,6E,10E)-geranylgeranyl diphosphate + H2O. It functions in the pathway secondary metabolite biosynthesis; terpenoid biosynthesis. Involved in the biosynthesis of labdane-type diterpenoid including cleroda-dienols, and peregrinol lactones and furan derivatives, dopaminergic diterpenoids that can bind to dopamine receptors in the human pituitary gland, have probably ability to lower prolactin levels, and are used to treat menstrual cycle disorders (e.g. premenstrual syndrome and mastodynia). Terpene synthase that produces peregrinol diphosphate from geranylgeranyl diphosphate (GGPP). This Vitex agnus-castus (Chaste tree) protein is Peregrinol diphosphate synthase TPS1, chloroplastic.